We begin with the raw amino-acid sequence, 643 residues long: Threonine--tRNA ligase (643 aa).

The TGS domain maps to 1 to 61; it reads MPIITLPDGA…SVNANINIIT (61 aa). The tract at residues 242 to 533 is catalytic; sequence DHRKIGKKLD…LIEEYEGKFP (292 aa). Zn(2+) is bound by residues Cys333, His384, and His510.

Belongs to the class-II aminoacyl-tRNA synthetase family. In terms of assembly, homodimer. Zn(2+) serves as cofactor.

Its subcellular location is the cytoplasm. The catalysed reaction is tRNA(Thr) + L-threonine + ATP = L-threonyl-tRNA(Thr) + AMP + diphosphate + H(+). Its function is as follows. Catalyzes the attachment of threonine to tRNA(Thr) in a two-step reaction: L-threonine is first activated by ATP to form Thr-AMP and then transferred to the acceptor end of tRNA(Thr). Also edits incorrectly charged L-seryl-tRNA(Thr). In Prochlorococcus marinus (strain SARG / CCMP1375 / SS120), this protein is Threonine--tRNA ligase.